Consider the following 482-residue polypeptide: Transcription termination/antitermination protein NusA (482 aa).

Residues Asn133–Thr197 form the S1 motif domain. The 147-residue stretch at Leu300–Val446 folds into the KH domain.

It belongs to the NusA family. Monomer. Binds directly to the core enzyme of the DNA-dependent RNA polymerase and to nascent RNA.

It localises to the cytoplasm. Functionally, participates in both transcription termination and antitermination. The sequence is that of Transcription termination/antitermination protein NusA from Borreliella burgdorferi (strain ATCC 35210 / DSM 4680 / CIP 102532 / B31) (Borrelia burgdorferi).